We begin with the raw amino-acid sequence, 466 residues long: ATP synthase subunit beta (466 aa).

Position 148–155 (148–155 (GGAGVGKT)) interacts with ATP.

This sequence belongs to the ATPase alpha/beta chains family. F-type ATPases have 2 components, CF(1) - the catalytic core - and CF(0) - the membrane proton channel. CF(1) has five subunits: alpha(3), beta(3), gamma(1), delta(1), epsilon(1). CF(0) has three main subunits: a(1), b(2) and c(9-12). The alpha and beta chains form an alternating ring which encloses part of the gamma chain. CF(1) is attached to CF(0) by a central stalk formed by the gamma and epsilon chains, while a peripheral stalk is formed by the delta and b chains.

The protein resides in the cell inner membrane. It carries out the reaction ATP + H2O + 4 H(+)(in) = ADP + phosphate + 5 H(+)(out). In terms of biological role, produces ATP from ADP in the presence of a proton gradient across the membrane. The catalytic sites are hosted primarily by the beta subunits. This is ATP synthase subunit beta from Xylella fastidiosa (strain 9a5c).